The following is an 89-amino-acid chain: Barrier-to-autointegration factor (89 aa).

Methionine 1 carries the post-translational modification N-acetylmethionine. Threonine 2 bears the N-acetylthreonine; in Barrier-to-autointegration factor, N-terminally processed mark. Residues threonine 2 and threonine 3 each carry the phosphothreonine; by VRK1 and VRK2 modification. Serine 4 is modified (phosphoserine; by VRK1 and VRK2). One can recognise a HhH domain in the interval 20–35 (VGSLAGIGEVLGKKLE).

It belongs to the BAF family. Homodimer. Heterodimerizes with BANF2. Interacts with ANKLE2/LEM4, leading to decreased phosphorylation by VRK1 and promoting dephosphorylation by protein phosphatase 2A (PP2A). Binds non-specifically to double-stranded DNA, and is found as a hexamer or dodecamer upon DNA binding. Binds to LEM domain-containing nuclear proteins such as LEMD3/MAN1, TMPO/LAP2 and EMD (emerin). Interacts with ANKLE1 (via LEM domain); the interaction may favor BANF1 dimerization. Interacts with CRX and LMNA (lamin-A). Binds linker histone H1.1 and core histones H3. Interacts with LEMD2 (via LEM domain). Interacts with PARP1; interaction takes place in response to oxidative DNA damage. Post-translationally, ser-4 is the major site of phosphorylation as compared to Thr-2 and Thr-3. Phosphorylation on Thr-2; Thr-3 and Ser-4 disrupts its ability to bind DNA and reduces its ability to bind LEM domain-containing proteins. Non phosphorylated BAF seems to enhance binding between EMD and LMNA. Dephosphorylated by protein phosphatase 2A (PP2A) following interaction with ANKLE2/LEM4 during mitotic exit, leading to mitotic nuclear envelope reassembly.

The protein localises to the nucleus. It is found in the chromosome. It localises to the nucleus envelope. The protein resides in the cytoplasm. Functionally, non-specific DNA-binding protein that plays key roles in mitotic nuclear reassembly, chromatin organization, DNA damage response, gene expression and intrinsic immunity against foreign DNA. Contains two non-specific double-stranded DNA (dsDNA)-binding sites which promote DNA cross-bridging. Plays a key role in nuclear membrane reformation at the end of mitosis by driving formation of a single nucleus in a spindle-independent manner. Transiently cross-bridges anaphase chromosomes via its ability to bridge distant DNA sites, leading to the formation of a dense chromatin network at the chromosome ensemble surface that limits membranes to the surface. Also acts as a negative regulator of innate immune activation by restricting CGAS activity toward self-DNA upon acute loss of nuclear membrane integrity. Outcompetes CGAS for DNA-binding, thereby preventing CGAS activation and subsequent damaging autoinflammatory responses. Also involved in DNA damage response: interacts with PARP1 in response to oxidative stress, thereby inhibiting the ADP-ribosyltransferase activity of PARP1. Involved in the recognition of exogenous dsDNA in the cytosol: associates with exogenous dsDNA immediately after its appearance in the cytosol at endosome breakdown and is required to avoid autophagy. In case of poxvirus infection, has an antiviral activity by blocking viral DNA replication. The sequence is that of Barrier-to-autointegration factor (BANF1) from Bos taurus (Bovine).